The sequence spans 449 residues: Glutamyl-tRNA reductase (449 aa).

Substrate contacts are provided by residues 49–52 (TCNR), serine 109, 114–116 (ETQ), and glutamine 120. The active-site Nucleophile is the cysteine 50. Residue 189-194 (GAGKMS) participates in NADP(+) binding. The tract at residues 427–449 (NFTHPREEMEESDEKRSYCGESR) is disordered.

It belongs to the glutamyl-tRNA reductase family. As to quaternary structure, homodimer.

The catalysed reaction is (S)-4-amino-5-oxopentanoate + tRNA(Glu) + NADP(+) = L-glutamyl-tRNA(Glu) + NADPH + H(+). Its pathway is porphyrin-containing compound metabolism; protoporphyrin-IX biosynthesis; 5-aminolevulinate from L-glutamyl-tRNA(Glu): step 1/2. Its function is as follows. Catalyzes the NADPH-dependent reduction of glutamyl-tRNA(Glu) to glutamate 1-semialdehyde (GSA). In Carboxydothermus hydrogenoformans (strain ATCC BAA-161 / DSM 6008 / Z-2901), this protein is Glutamyl-tRNA reductase.